We begin with the raw amino-acid sequence, 470 residues long: MDAAAPDLGIGIVAAVRGGIVDIRFANRPPSIRSLVRTGKAGEIVIEILSQLDAHRVRGIALTPTQGLARGMLVKDTGGPLRAPVGRATLSRMFDVFGEVIDRKPPPCDAQWRTVHHSPPPLVRRSTRSEIFETGIKIIDVLMPLERGGKAGLLGGAGVGKTILLTEMIHNVAGRHRGVSIFCGIGERCREGEELYRDIMAAGVLENMVMVFGQMNEPPGARFRVAHAALTMAEYFRDDEHRDVLLLVDNIYRFIQAGMEVSGLMGQMPSRMGYQPTMGTELAQLEERIAHTDNGAITSIQAVYVPADDFSDPAAVHAFSHFSASIVLSRKRASEGLYPAIDPLQSGAKMATPSVIGERHYRIAQETRHTLAQYTELKDVIAMLGLEQLSPEDRALVARARRLERFFTQPFFTTEHFTGIKGKLVSLEDALDGCERILRDEYRDLPEQALYMIGKASEAEPGGSAKNASS.

155–162 (GGAGVGKT) lines the ATP pocket.

It belongs to the ATPase alpha/beta chains family. As to quaternary structure, F-type ATPases have 2 components, CF(1) - the catalytic core - and CF(0) - the membrane proton channel. CF(1) has five subunits: alpha(3), beta(3), gamma(1), delta(1), epsilon(1). CF(0) has three main subunits: a(1), b(2) and c(9-12). The alpha and beta chains form an alternating ring which encloses part of the gamma chain. CF(1) is attached to CF(0) by a central stalk formed by the gamma and epsilon chains, while a peripheral stalk is formed by the delta and b chains.

It is found in the cell inner membrane. It catalyses the reaction ATP + H2O + 4 H(+)(in) = ADP + phosphate + 5 H(+)(out). In terms of biological role, produces ATP from ADP in the presence of a proton gradient across the membrane. The catalytic sites are hosted primarily by the beta subunits. This is ATP synthase subunit beta 2 from Nitrosospira multiformis (strain ATCC 25196 / NCIMB 11849 / C 71).